The following is a 436-amino-acid chain: MLDTNLLFNHFEWVAKKLARKNFVLNFDELNQYNDLRKILQKKIEKLQIDRKNLSKTIILAKSQQINLQSLQKQARLLNQKLILIKSEIRTLKSKIKQYQLSIPNIPDDEIPNGFKDQDNIEIMRWGKVHKYDFKLLDHITLGKLIGGIDLSSASKITGTRFIILKGEIAYLHRALSQFMIDIHIQNHGYIEYYLPYLINVESLYGSGQLPKFYDDLFHTQSVVSVNSSKCSTYTLIPTAEVPLVNIMRSVTVHKNELPIKMVAHTPCFRLEAGTYGYRAHGLIRTHQFDKVELVQVVHPDQSVQALEEITNHAEKILQLLELPYRKMLLCAGNISFTSCKTYDLEVWLPARNEYCEISSCSNIRDFQSRRINARFKDGINKRSKLLHTLNASGVAVGRALVAILENYQLENGCIKIPEVLSPYMNGMTHIHYQNK.

239 to 241 (TAE) serves as a coordination point for L-serine. 270–272 (RLE) provides a ligand contact to ATP. Glu293 serves as a coordination point for L-serine. An ATP-binding site is contributed by 357-360 (EISS). Ser393 contributes to the L-serine binding site.

The protein belongs to the class-II aminoacyl-tRNA synthetase family. Type-1 seryl-tRNA synthetase subfamily. As to quaternary structure, homodimer. The tRNA molecule binds across the dimer.

It localises to the cytoplasm. It carries out the reaction tRNA(Ser) + L-serine + ATP = L-seryl-tRNA(Ser) + AMP + diphosphate + H(+). The catalysed reaction is tRNA(Sec) + L-serine + ATP = L-seryl-tRNA(Sec) + AMP + diphosphate + H(+). It functions in the pathway aminoacyl-tRNA biosynthesis; selenocysteinyl-tRNA(Sec) biosynthesis; L-seryl-tRNA(Sec) from L-serine and tRNA(Sec): step 1/1. Functionally, catalyzes the attachment of serine to tRNA(Ser). Is also able to aminoacylate tRNA(Sec) with serine, to form the misacylated tRNA L-seryl-tRNA(Sec), which will be further converted into selenocysteinyl-tRNA(Sec). The polypeptide is Serine--tRNA ligase (Blochmanniella floridana).